The following is a 231-amino-acid chain: 5'-methylthioadenosine/S-adenosylhomocysteine nucleosidase (231 aa).

The active-site Proton acceptor is the glutamate 12. Substrate-binding positions include glycine 78, methionine 153, and 174-175 (ME). Aspartate 198 functions as the Proton donor in the catalytic mechanism.

Belongs to the PNP/UDP phosphorylase family. MtnN subfamily.

The catalysed reaction is S-adenosyl-L-homocysteine + H2O = S-(5-deoxy-D-ribos-5-yl)-L-homocysteine + adenine. It carries out the reaction S-methyl-5'-thioadenosine + H2O = 5-(methylsulfanyl)-D-ribose + adenine. The enzyme catalyses 5'-deoxyadenosine + H2O = 5-deoxy-D-ribose + adenine. The protein operates within amino-acid biosynthesis; L-methionine biosynthesis via salvage pathway; S-methyl-5-thio-alpha-D-ribose 1-phosphate from S-methyl-5'-thioadenosine (hydrolase route): step 1/2. Functionally, catalyzes the irreversible cleavage of the glycosidic bond in both 5'-methylthioadenosine (MTA) and S-adenosylhomocysteine (SAH/AdoHcy) to adenine and the corresponding thioribose, 5'-methylthioribose and S-ribosylhomocysteine, respectively. Also cleaves 5'-deoxyadenosine, a toxic by-product of radical S-adenosylmethionine (SAM) enzymes, into 5-deoxyribose and adenine. This chain is 5'-methylthioadenosine/S-adenosylhomocysteine nucleosidase, found in Psychromonas ingrahamii (strain DSM 17664 / CCUG 51855 / 37).